A 223-amino-acid chain; its full sequence is Uracil-DNA glycosylase (223 aa).

The active-site Proton acceptor is the D64.

This sequence belongs to the uracil-DNA glycosylase (UDG) superfamily. UNG family.

Its subcellular location is the cytoplasm. It carries out the reaction Hydrolyzes single-stranded DNA or mismatched double-stranded DNA and polynucleotides, releasing free uracil.. Its function is as follows. Excises uracil residues from the DNA which can arise as a result of misincorporation of dUMP residues by DNA polymerase or due to deamination of cytosine. This chain is Uracil-DNA glycosylase, found in Desulfitobacterium hafniense (strain DSM 10664 / DCB-2).